We begin with the raw amino-acid sequence, 129 residues long: Protein RfbJ (129 aa).

This sequence belongs to the glycosyltransferase 2 family.

The protein operates within bacterial outer membrane biogenesis; lipopolysaccharide biosynthesis. This Shigella flexneri protein is Protein RfbJ (rfbJ).